Here is a 234-residue protein sequence, read N- to C-terminus: MVSLDKAVIARLRKGGEEFEVLVDPYLARDLKEGKEVNFEDLLAAEEVFKDAKKGERASVDELRKIFGTDDVFEIARKIILEGEVQITAEQRREMLEAKRKQIINFISRNTIDPRTNAPHPPSRIERALEEAKVHIDIFKSVEAQVKDIVKALKPILPLKFEEMEIAIKIPPEHTGRAISALYNFGGVTREEWQRDGSWICVMRIPSGMYGDLMDLLGKVAKGEALTKVLRRIG.

The protein belongs to the SDO1/SBDS family.

The protein is Ribosome maturation protein SDO1 homolog of Archaeoglobus fulgidus (strain ATCC 49558 / DSM 4304 / JCM 9628 / NBRC 100126 / VC-16).